Consider the following 383-residue polypeptide: MHLSKASFLFDCSRFILNFHERCLKNGVRTKKACVICRSKKQKCDGQLPCLYCKKYEYQCAYEGQATSTCNSEASLFNDANFKIGSDYRSKRIKVVSDTNNNKEDGDGKLSFTQCNPRMDIHHEAENFTAMVPYYEPKKFRFFYENSAIVFPRIYVFIYFEEVHPIFSMFDQKAMEKKIQFLWDNKSTDSCSEYVVISVKGKLVEHITQVLESSLSTTILSSIQLTVCWVLRTIYLHATTRPHLSWIASSVSMHYAEIVGLHQEITAEYGTRGIELTNITTQMVEEDGPAYQLVLLFKIIMEYQIISEDSRFVYLQAFQRLDQLCDIHSPALVLLKATVCFHLYRNLFLARIKPFCVIVSILFSVIDRALESCKQLVSQRKAW.

The segment at residues 34-60 is a DNA-binding region (zn(2)-C6 fungal-type); it reads CVICRSKKQKCDGQLPCLYCKKYEYQC.

It localises to the nucleus. Functionally, probable transcriptional repressor of multidrug resistance genes. This Schizosaccharomyces pombe (strain 972 / ATCC 24843) (Fission yeast) protein is Probable transcriptional repressor C1348.12.